Consider the following 365-residue polypeptide: MGDVDNLSLPTKLPDNAVVCLMAPTASGKTSLAYELYETGRFEIISVDSALIYKDMNIGTAKPTQSELEQYPHHLVDIIDPTQSYSVANFVSDTQQLVEQIHQRGKTPLLVGGTLMYYMALFNGLSPIPDTDPNVRAQVEAQRQQQGIEALHDYLSKIDPPLAERLPIGDTQRITRAIEVYQQTGKPLSYWQQLPKQALSDNPQQYWLGLAVMPDRAWLHERIALRLEMMWADGFFDEVGQLLTNYSLDAQMPSMRCVGYRQVIDYLIATDHPLISRLKINGQSVDNKGLEVNEAHKSIACQDMKNKALYATRQLAKRQYTWLRNLVASHQPSDTLQTSGAQTEQKVVHSFDTIQDAKAYLFSRL.

23-30 (APTASGKT) serves as a coordination point for ATP. Residue 25 to 30 (TASGKT) coordinates substrate. Interaction with substrate tRNA regions lie at residues 48 to 51 (DSAL), 172 to 176 (QRITR), and 256 to 261 (RCVGYR).

It belongs to the IPP transferase family. As to quaternary structure, monomer. Requires Mg(2+) as cofactor.

It catalyses the reaction adenosine(37) in tRNA + dimethylallyl diphosphate = N(6)-dimethylallyladenosine(37) in tRNA + diphosphate. In terms of biological role, catalyzes the transfer of a dimethylallyl group onto the adenine at position 37 in tRNAs that read codons beginning with uridine, leading to the formation of N6-(dimethylallyl)adenosine (i(6)A). The chain is tRNA dimethylallyltransferase from Psychrobacter sp. (strain PRwf-1).